A 170-amino-acid chain; its full sequence is Shikimate kinase (170 aa).

11–16 (LSGKST) provides a ligand contact to ATP. Residue serine 15 participates in Mg(2+) binding. Aspartate 33, arginine 57, and glycine 79 together coordinate substrate. An ATP-binding site is contributed by arginine 119. Position 137 (arginine 137) interacts with substrate.

The protein belongs to the shikimate kinase family. As to quaternary structure, monomer. It depends on Mg(2+) as a cofactor.

The protein localises to the cytoplasm. The enzyme catalyses shikimate + ATP = 3-phosphoshikimate + ADP + H(+). The protein operates within metabolic intermediate biosynthesis; chorismate biosynthesis; chorismate from D-erythrose 4-phosphate and phosphoenolpyruvate: step 5/7. In terms of biological role, catalyzes the specific phosphorylation of the 3-hydroxyl group of shikimic acid using ATP as a cosubstrate. The sequence is that of Shikimate kinase from Clostridium botulinum (strain 657 / Type Ba4).